The primary structure comprises 1145 residues: MQFHLIRKYASKVSREHYASSSVKIFRRVKPPQKVNKPKKPENVENGPTEYAENLVKVQMISRNLHAQLFPQAPRSISEQQVASAKVYKDELRRHGVDIESSAPVSDVQLKLPALRGANIEEHFHNIAKEQVQPYEELLLPLVQCEQLPKRPKRWAFHTGWTAYDPEDGTATPVDHPLEKGLVFDVEVCVSEGQAPVLATAVSTKRWYSWVSSKLTKHRLSVEKLEPLDVDTDSERPHYTTDELIPLGTTGPGLVVGHNVSYDRARLKEQYLTEDTGTRFVDTMSLHMCVSGVTSYQRAMLKSKKEPAAEDLGWLEQSSLNSLVEVHRLYCGGDTLSKEPRNIFVEGTLEQVRQSFQSLTNYCASDVEATHRILRVLYPLYAERFPHPASLAGMLEMGSAYLPVNSNWERYIREAQLTYEDLSIEAKYHLGRRAEEACSLLLDDQYRQNLWLWDEDWSVQELKLKQPPKRKPLPTVELKDSGNTPEERRLQAKFQHLYDQQALLPARRPLLPGYPLWYRKLCRKPPAKRADEILEDDEEPWSPGASEISTGMQIAPKLLSLCWEGYPLHYEREQGWGFLVPFRSDSEGVDRLPMEQLLAHCPVPEFARLSASKAESDMAFDMLPGQVEQHLGKREHYKKLSQKQQRLETQYQGSGVWCNKVLDDCCFFLKLPHKNGPSFRVGNPLSKDFLNKFAENVLSSGDPSCQAAARVIDIARMMSYWRNNRDRIMGQMVVWLDSQQLPNEFTGEKCQPIAYGAICPQVVACGTLTRRAMEPTWMTASNSRPDRLGSELRSMVQAPPGYRLVGADVDSQELWIASVLGDAYACGEHGATPLGWMTLSGSKSNGSDMHSITAKAVGISRDHAKVINYARIYGAGQLFAETLLRQFNPTFSASEAKAKAMKMFSITKGKRVYRLREEFHDELEDRAYSSYEASRLAIQRNRTLAEVFHRPNWQGGTESAMFNRLEEIATGSQPRTPFLGGRLSRALEADTGPEQEQRFLPTRINWVVQSGAVDFLHLMLVSMRWLMGSHVRFCLSFHDELRYLVKEELSPKAALAMHITNLMTRSFCVSRIGLQDLPMSVAFFSSVEVDTVLRKECTMDCKTPSNPHGLRIGYGIQPGQSLSVAEAIEKAGGNDVSQWDWIKKS.

A mitochondrion-targeting transit peptide spans 1 to 9 (MQFHLIRKY).

The protein belongs to the DNA polymerase type-A family. As to quaternary structure, component of the DNA polymerase gamma complex consisting of two subunits: the catalytic subunit DNApol-gamma/DNApolG1 and the accessory subunit PolG2/DNApol-gamma35. Mg(2+) is required as a cofactor.

It localises to the mitochondrion. The catalysed reaction is DNA(n) + a 2'-deoxyribonucleoside 5'-triphosphate = DNA(n+1) + diphosphate. Stimulated by KCl, and inhibited by the small molecules o 2',3'-dideoxythymidine 5'-triphosphate (d2TTP) and N-ethylmaleimide (NEM). Functionally, as the catalytic component of the DNA polymerase gamma complex is involved in the replication of mitochondrial DNA (mtDNA). Has both 5'-3' DNA polymerase and a highly mispair-specific 3'-5' exonuclease activity. At the end of mtDNA replication DNA ends are ligated to produce a closed circular mtDNA molecule, its exonuclease activity is required for formation of these ligatable ends by preventing DNA synthesis from continuing past the 5'-end of downstream DNA into duplex DNA regions. Does not possess DNA primase activity, does not catalyze strand displacement synthesis and does not contain a 5'-3' exonuclease activity to catalyze nick translation. Important for promoting the elimination of paternal mitochondrial DNA during spermatogenesis, however its exact role in this function has not yet been identified and appears to be independent of its 3'-5'-exonuclease activity and only partially dependent on its DNA polymerase activity. In Drosophila melanogaster (Fruit fly), this protein is DNA polymerase subunit gamma-1, mitochondrial.